The following is a 425-amino-acid chain: Synaptotagmin-4 (425 aa).

Topologically, residues 1 to 16 (MAPITTSRVEFDEIPT) are vesicular. Residues 17–37 (VVGIFSAFGLVFTVSLFAWIC) traverse the membrane as a helical segment. Residues 38–425 (CQRRSAKSNK…IAKWHMLCDG (388 aa)) lie on the Cytoplasmic side of the membrane. 2 disordered regions span residues 102–121 (NGNF…LENV) and 126–147 (FPET…SLTS). A compositionally biased stretch (polar residues) spans 105-119 (FPKTNPKAGSSSDLE). A Phosphoserine; by MAPK8 modification is found at S135. The span at 137 to 146 (ESLKSSTSLT) shows a compositional bias: low complexity. C2 domains follow at residues 153–274 (KLGT…MLMT) and 287–420 (GRGE…AKWH). Residues D246, S249, and D252 each coordinate Ca(2+).

Belongs to the synaptotagmin family. As to quaternary structure, interacts with KIF1A; the interaction increases in presence of calcium and decreases when SYT4 is phosphorylated at Ser-135. Requires Ca(2+) as cofactor. In terms of processing, phosphorylation at Ser-135 by MAPK8/JNK1 reduces interaction with KIF1A and neuronal dense core vesicles mobility. In terms of tissue distribution, widely expressed. Expressed in the brain. Expressed in pituitary gland, cerebellum, cortex, hypothalamus and hippocampus.

The protein localises to the cytoplasmic vesicle. The protein resides in the secretory vesicle. It localises to the neuronal dense core vesicle membrane. In terms of biological role, synaptotagmin family member which does not bind Ca(2+). Involved in neuronal dense core vesicles (DCVs) mobility through its interaction with KIF1A. Upon increased neuronal activity, phosphorylation by MAPK8/JNK1 destabilizes the interaction with KIF1A and captures DCVs to synapses. Plays a role in dendrite formation by melanocytes. This is Synaptotagmin-4 (Syt4) from Rattus norvegicus (Rat).